A 258-amino-acid polypeptide reads, in one-letter code: Myogenic factor 5 (258 aa).

A disordered region spans residues 21-50 (LSSPEGEFPEDFEPRELPPFGAPAPTEPAC). Positions 85-136 (DRRKAATMRERRRLKKVNQAFETLKRCTTANPNQRLPKVEILRNAIRYIESL) constitute a bHLH domain. Residues 220–258 (AEEPGLPLRHAGSLSPGASIDSGPGTPGSPPPRRTYQAL) are disordered.

As to quaternary structure, efficient DNA binding requires dimerization with another bHLH protein.

It localises to the nucleus. In terms of biological role, acts as a transcriptional activator that promotes transcription of muscle-specific target genes and plays a role in muscle differentiation. Induces fibroblasts to differentiate into myoblasts. Probable sequence specific DNA-binding protein. This Gallus gallus (Chicken) protein is Myogenic factor 5 (MYF5).